The chain runs to 336 residues: Ornithine carbamoyltransferase (336 aa).

Residues 56–59, glutamine 83, arginine 107, and 134–137 contribute to the carbamoyl phosphate site; these read STRT and HPTQ. L-ornithine is bound by residues asparagine 168, aspartate 232, and 236–237; that span reads SM. Residues 274–275 and arginine 320 each bind carbamoyl phosphate; that span reads CL.

Belongs to the aspartate/ornithine carbamoyltransferase superfamily. OTCase family.

It is found in the cytoplasm. The enzyme catalyses carbamoyl phosphate + L-ornithine = L-citrulline + phosphate + H(+). It participates in amino-acid biosynthesis; L-arginine biosynthesis; L-arginine from L-ornithine and carbamoyl phosphate: step 1/3. In terms of biological role, reversibly catalyzes the transfer of the carbamoyl group from carbamoyl phosphate (CP) to the N(epsilon) atom of ornithine (ORN) to produce L-citrulline. In Erwinia tasmaniensis (strain DSM 17950 / CFBP 7177 / CIP 109463 / NCPPB 4357 / Et1/99), this protein is Ornithine carbamoyltransferase.